An 86-amino-acid polypeptide reads, in one-letter code: Cell division topological specificity factor (86 aa).

Belongs to the MinE family.

Functionally, prevents the cell division inhibition by proteins MinC and MinD at internal division sites while permitting inhibition at polar sites. This ensures cell division at the proper site by restricting the formation of a division septum at the midpoint of the long axis of the cell. The chain is Cell division topological specificity factor from Polaromonas sp. (strain JS666 / ATCC BAA-500).